The chain runs to 324 residues: Proto-oncogene Mas (324 aa).

The Extracellular portion of the chain corresponds to 1 to 35 (MDQSNMTSLAEEKAMNTSSRNASLGSSHPPIPIVH). 3 N-linked (GlcNAc...) asparagine glycosylation sites follow: asparagine 5, asparagine 16, and asparagine 21. A helical transmembrane segment spans residues 36-60 (WVIMSISPLGFVENGILLWFLCFRM). At 61-64 (RRNP) the chain is on the cytoplasmic side. Residues 65–86 (FTVYITHLSIADISLLFCIFIL) form a helical membrane-spanning segment. Over 87-103 (SIDYALDYELSSGHHYT) the chain is Extracellular. Residues 104–127 (IVTLSVTFLFGYNTGLYLLTAISV) traverse the membrane as a helical segment. The Cytoplasmic segment spans residues 128 to 148 (ERCLSVLYPIWYRCHRPKHQS). Residues 149–171 (AFVCALLWALSCLVTTMEYVMCI) form a helical membrane-spanning segment. Topologically, residues 172–184 (DSGEESHSRSDCR) are extracellular. A helical membrane pass occupies residues 185–205 (AVIIFIAILSFLVFTPLMLVS). Residues 206–223 (STILVVKIRKNTWASHSS) are Cytoplasmic-facing. The helical transmembrane segment at 224-244 (KLYIVIMVTIIIFLIFAMPMR) threads the bilayer. Over 245–262 (VLYLLYYEYWSAFGNLHN) the chain is Extracellular. A helical transmembrane segment spans residues 263–283 (ISLLFSTINSSANPFIYFFVG). Over 284–324 (SSKKKRFRESLKVVLTRAFKDEMQPRRQEGNGNTVSIETVV) the chain is Cytoplasmic.

The protein belongs to the G-protein coupled receptor 1 family. In terms of assembly, interacts with AGTR1. Interacts with FLNA (via filamin repeat 21); increases PKA-mediated phosphorylation of FLNA.

Its subcellular location is the cell membrane. Acts specifically as a functional antagonist of AGTR1 (angiotensin-2 type 1 receptor), although it up-regulates AGTR1 receptor levels. Positive regulation of AGTR1 levels occurs through activation of the G-proteins GNA11 and GNAQ, and stimulation of the protein kinase C signaling cascade. The antagonist effect on AGTR1 function is probably due to AGTR1 being physically altered by MAS1. Receptor for angiotensin 1-7. This chain is Proto-oncogene Mas (Mas1), found in Mus musculus (Mouse).